The primary structure comprises 696 residues: Serine/threonine-protein kinase sck1 (696 aa).

Disordered regions lie at residues 1-59 and 77-118; these read MTEI…YDPV and HKEQ…TPPS. The segment covering 11–37 has biased composition (polar residues); it reads SSNSENTNQASPSTIQSHSTQPVLSND. Composition is skewed to basic and acidic residues over residues 38-49 and 77-88; these read HSTKVNDYEGKE and HKEQSLKEDKES. In terms of domain architecture, C2 spans 122–272; that stretch reads IRHDTVVPKD…VQEAWYKLEP (151 aa). Positions 302-563 constitute a Protein kinase domain; the sequence is FTALRLIGKG…TTELKEHPFF (262 aa). Residues 308–316 and Lys331 each bind ATP; that span reads IGKGTFGQV. Asp428 acts as the Proton acceptor in catalysis. An AGC-kinase C-terminal domain is found at 564-643; that stretch reads ADINWDLLSK…VNKSIDEQFQ (80 aa). The residue at position 632 (Thr632) is a Phosphothreonine. Ser665 is modified (phosphoserine).

It belongs to the protein kinase superfamily. AGC Ser/Thr protein kinase family. cAMP subfamily.

The enzyme catalyses L-seryl-[protein] + ATP = O-phospho-L-seryl-[protein] + ADP + H(+). It catalyses the reaction L-threonyl-[protein] + ATP = O-phospho-L-threonyl-[protein] + ADP + H(+). In terms of biological role, protein kinase that is part of growth control pathway which is at least partially redundant with the cAMP pathway. Required for trehalase activation. The sequence is that of Serine/threonine-protein kinase sck1 (sck1) from Schizosaccharomyces pombe (strain 972 / ATCC 24843) (Fission yeast).